A 445-amino-acid polypeptide reads, in one-letter code: Chromosomal replication initiator protein DnaA (445 aa).

Positions 1-73 (MSTHLTETWE…VNALKLLTSK (73 aa)) are domain I, interacts with DnaA modulators. Positions 73–106 (KKYNIDFIVTTEEKIEKNHNNEKSNIVVNDEMST) are domain II. Positions 107 to 323 (MLNPKYTFDS…GALIRIVAFS (217 aa)) are domain III, AAA+ region. Residues G151, G153, K154, and T155 each coordinate ATP. Residues 324-445 (SLTNKEISVD…NDLNKRINQK (122 aa)) form a domain IV, binds dsDNA region.

It belongs to the DnaA family. Oligomerizes as a right-handed, spiral filament on DNA at oriC.

The protein localises to the cytoplasm. Its function is as follows. Plays an essential role in the initiation and regulation of chromosomal replication. ATP-DnaA binds to the origin of replication (oriC) to initiate formation of the DNA replication initiation complex once per cell cycle. Binds the DnaA box (a 9 base pair repeat at the origin) and separates the double-stranded (ds)DNA. Forms a right-handed helical filament on oriC DNA; dsDNA binds to the exterior of the filament while single-stranded (ss)DNA is stabiized in the filament's interior. The ATP-DnaA-oriC complex binds and stabilizes one strand of the AT-rich DNA unwinding element (DUE), permitting loading of DNA polymerase. After initiation quickly degrades to an ADP-DnaA complex that is not apt for DNA replication. Binds acidic phospholipids. In Clostridium botulinum (strain Loch Maree / Type A3), this protein is Chromosomal replication initiator protein DnaA.